A 113-amino-acid chain; its full sequence is Outer membrane protein assembly factor BamE (113 aa).

The signal sequence occupies residues Met1 to Gly19. Cys20 is lipidated: N-palmitoyl cysteine. The S-diacylglycerol cysteine moiety is linked to residue Cys20.

Belongs to the BamE family. Part of the Bam complex, which is composed of the outer membrane protein BamA, and four lipoproteins BamB, BamC, BamD and BamE.

It is found in the cell outer membrane. In terms of biological role, part of the outer membrane protein assembly complex, which is involved in assembly and insertion of beta-barrel proteins into the outer membrane. The polypeptide is Outer membrane protein assembly factor BamE (Escherichia coli O6:H1 (strain CFT073 / ATCC 700928 / UPEC)).